Here is a 216-residue protein sequence, read N- to C-terminus: Somatotropin (216 aa).

Positions 1-26 (MAAGPRTSMLLAFALLCLPWTQEVGA) are cleaved as a signal peptide. His45 serves as a coordination point for Zn(2+). A disulfide bond links Cys78 and Cys189. Ser131 carries the post-translational modification Phosphoserine. Glu198 serves as a coordination point for Zn(2+). A disulfide bridge connects residues Cys206 and Cys214.

The protein belongs to the somatotropin/prolactin family.

Its subcellular location is the secreted. Functionally, plays an important role in growth control. Its major role in stimulating body growth is to stimulate the liver and other tissues to secrete IGF1. It stimulates both the differentiation and proliferation of myoblasts. It also stimulates amino acid uptake and protein synthesis in muscle and other tissues. The polypeptide is Somatotropin (GH1) (Delphinus delphis (Short-beaked common dolphin)).